We begin with the raw amino-acid sequence, 419 residues long: Light-independent protochlorophyllide reductase subunit N (419 aa).

Cysteine 20, cysteine 45, and cysteine 102 together coordinate [4Fe-4S] cluster.

Belongs to the BchN/ChlN family. In terms of assembly, protochlorophyllide reductase is composed of three subunits; BchL, BchN and BchB. Forms a heterotetramer of two BchB and two BchN subunits. The cofactor is [4Fe-4S] cluster.

It carries out the reaction chlorophyllide a + oxidized 2[4Fe-4S]-[ferredoxin] + 2 ADP + 2 phosphate = protochlorophyllide a + reduced 2[4Fe-4S]-[ferredoxin] + 2 ATP + 2 H2O. Its pathway is porphyrin-containing compound metabolism; bacteriochlorophyll biosynthesis (light-independent). In terms of biological role, component of the dark-operative protochlorophyllide reductase (DPOR) that uses Mg-ATP and reduced ferredoxin to reduce ring D of protochlorophyllide (Pchlide) to form chlorophyllide a (Chlide). This reaction is light-independent. The NB-protein (BchN-BchB) is the catalytic component of the complex. This chain is Light-independent protochlorophyllide reductase subunit N, found in Chlorobaculum tepidum (strain ATCC 49652 / DSM 12025 / NBRC 103806 / TLS) (Chlorobium tepidum).